A 158-amino-acid chain; its full sequence is Ethylene-responsive transcription factor ERF120 (158 aa).

A DNA-binding region (AP2/ERF) is located at residues 86-147 (KHKGVRKKPS…SARRGTKNGE (62 aa)). The interval 134 to 158 (VGRRSARRGTKNGEEASTKKTTEKN) is disordered. Residues 144 to 158 (KNGEEASTKKTTEKN) are compositionally biased toward basic and acidic residues.

It belongs to the AP2/ERF transcription factor family. ERF subfamily.

It localises to the nucleus. Functionally, probably acts as a transcriptional activator. Binds to the GCC-box pathogenesis-related promoter element. May be involved in the regulation of gene expression by stress factors and by components of stress signal transduction pathways. The chain is Ethylene-responsive transcription factor ERF120 (ERF120) from Arabidopsis thaliana (Mouse-ear cress).